The sequence spans 447 residues: MRSVSYVQRVALEFSGSLFPHAICLGDVDNDTLNELVVGDTSGKVSVYKNDDSRPWLTCSCQGMLTCVGVGDVCNKGKNLLVAVSAEGWFHLFDLTPAKVLDASGHHETLIGEEQRPVFKQHIPANTKVMLISDIDGDGCRELVVGYTDRVVRAFRWEELGEGPEHLTGQLVSLKKWMLEGQVDSLSVTLGPLGLPELMVSQPGCAYAILLCTWKKDTGSPPASEGPTDGSRETPAARDVVLHQTSGRIHNKNVSTHLIGNIKQGHGTESSGSGLFALCTLDGTLKLMEEMEEADKLLWSVQVDHQLFALEKLDVTGNGHEEVVACAWDGQTYIIDHNRTVVRFQVDENIRAFCAGLYACKEGRNSPCLVYVTFNQKIYVYWEVQLERMESTNLVKLLETKPEYHSLLQELGVDPDDLPVTRALLHQTLYHPDQPPQCAPSSLQDPT.

Residues Phe-19–Tyr-48 form an FG-GAP 1; atypical repeat. Phosphoserine is present on Ser-104. An FG-GAP 2; atypical repeat occupies Asn-126–Phe-155. Ser-220 carries the phosphoserine modification.

In terms of assembly, part of the KICSTOR complex composed of KPTN, ITFG2, KICS2 and SZT2. SZT2 probably serves as a link between the other three proteins in the KICSTOR complex and may mediate the direct interaction with the GATOR complex via GATOR1. The KICSTOR complex interacts directly with the GATOR1 complex and most probably indirectly with the GATOR2 complex in an amino acid-independent manner.

Its subcellular location is the lysosome membrane. Its function is as follows. As part of the KICSTOR complex functions in the amino acid-sensing branch of the TORC1 signaling pathway. Recruits, in an amino acid-independent manner, the GATOR1 complex to the lysosomal membranes and allows its interaction with GATOR2 and the RAG GTPases. Functions upstream of the RAG GTPases and is required to negatively regulate mTORC1 signaling in absence of amino acids. In absence of the KICSTOR complex mTORC1 is constitutively localized to the lysosome and activated. The KICSTOR complex is also probably involved in the regulation of mTORC1 by glucose. In Homo sapiens (Human), this protein is KICSTOR complex protein ITFG2.